Consider the following 339-residue polypeptide: Protein-arginine kinase (339 aa).

One can recognise a Phosphagen kinase C-terminal domain in the interval 14–242 (IVINSNISLS…LNVISEEKKF (229 aa)). ATP-binding positions include 17–21 (NSNIS), 164–168 (RASVN), and 195–200 (KGLYEE).

It belongs to the ATP:guanido phosphotransferase family.

It carries out the reaction L-arginyl-[protein] + ATP = N(omega)-phospho-L-arginyl-[protein] + ADP + H(+). Catalyzes the specific phosphorylation of arginine residues in proteins. This chain is Protein-arginine kinase, found in Clostridium botulinum (strain Eklund 17B / Type B).